A 347-amino-acid polypeptide reads, in one-letter code: Isopentenyl-diphosphate delta-isomerase (347 aa).

Position 11-12 (11-12 (RK)) interacts with substrate. FMN-binding positions include 72-74 (AMT), serine 102, and asparagine 131. Glutamine 161 contacts substrate. Residue glutamate 162 coordinates Mg(2+). FMN contacts are provided by residues lysine 192, threonine 222, and 287-288 (AG).

It belongs to the IPP isomerase type 2 family. As to quaternary structure, homooctamer. Dimer of tetramers. FMN is required as a cofactor. NADPH serves as cofactor. The cofactor is Mg(2+).

The protein resides in the cytoplasm. The catalysed reaction is isopentenyl diphosphate = dimethylallyl diphosphate. Functionally, involved in the biosynthesis of isoprenoids. Catalyzes the 1,3-allylic rearrangement of the homoallylic substrate isopentenyl (IPP) to its allylic isomer, dimethylallyl diphosphate (DMAPP). The polypeptide is Isopentenyl-diphosphate delta-isomerase (Lactococcus lactis subsp. lactis (strain IL1403) (Streptococcus lactis)).